A 144-amino-acid chain; its full sequence is 6,7-dimethyl-8-ribityllumazine synthase (144 aa).

Residues phenylalanine 21, 56–58 (AYE), and 80–82 (AVI) contribute to the 5-amino-6-(D-ribitylamino)uracil site. 85-86 (GT) serves as a coordination point for (2S)-2-hydroxy-3-oxobutyl phosphate. Histidine 88 serves as the catalytic Proton donor. Phenylalanine 113 is a 5-amino-6-(D-ribitylamino)uracil binding site. Position 127 (arginine 127) interacts with (2S)-2-hydroxy-3-oxobutyl phosphate.

This sequence belongs to the DMRL synthase family. In terms of assembly, forms an icosahedral capsid composed of 60 subunits, arranged as a dodecamer of pentamers.

It carries out the reaction (2S)-2-hydroxy-3-oxobutyl phosphate + 5-amino-6-(D-ribitylamino)uracil = 6,7-dimethyl-8-(1-D-ribityl)lumazine + phosphate + 2 H2O + H(+). It participates in cofactor biosynthesis; riboflavin biosynthesis; riboflavin from 2-hydroxy-3-oxobutyl phosphate and 5-amino-6-(D-ribitylamino)uracil: step 1/2. Functionally, catalyzes the formation of 6,7-dimethyl-8-ribityllumazine by condensation of 5-amino-6-(D-ribitylamino)uracil with 3,4-dihydroxy-2-butanone 4-phosphate. This is the penultimate step in the biosynthesis of riboflavin. This Photobacterium leiognathi protein is 6,7-dimethyl-8-ribityllumazine synthase (ribH).